Here is a 235-residue protein sequence, read N- to C-terminus: Probable tetraspanin tspB (235 aa).

The Cytoplasmic portion of the chain corresponds to 1 to 23 (MVDTTNLIPNTPRYLKVPLIAFN). A helical transmembrane segment spans residues 24 to 44 (TILWVLGLVLVIIGSIGVSFF). Residues 45–68 (SNFKDFTKVSKASAALSNLTTGAP) lie on the Extracellular side of the membrane. Residue asparagine 62 is glycosylated (N-linked (GlcNAc...) asparagine). The helical transmembrane segment at 69 to 89 (AGVLVIGIFFVILTVIGCFVA) threads the bilayer. Residues 90 to 93 (GKEK) are Cytoplasmic-facing. The helical transmembrane segment at 94–114 (LVGLVIYTMLMLIILVALIGV) threads the bilayer. Over 115-200 (GGKALTLHND…ISSNLYLVGA (86 aa)) the chain is Extracellular. 2 N-linked (GlcNAc...) asparagine glycosylation sites follow: asparagine 143 and asparagine 159. A helical transmembrane segment spans residues 201 to 221 (AAVSIGVIEFICMLFALFLII). Residues 222–235 (RICRAPRTKSYDYQ) are Cytoplasmic-facing.

This sequence belongs to the tetraspanin (TM4SF) family.

The protein resides in the membrane. This is Probable tetraspanin tspB (tspB) from Dictyostelium discoideum (Social amoeba).